The primary structure comprises 218 residues: Small ribosomal subunit protein mS34 (218 aa).

The tract at residues 180-218 (KNGDTSTEEPMLNVQRIRMEPWDYPAKQEDKGRAKGTPV) is disordered. The segment covering 196 to 212 (IRMEPWDYPAKQEDKGR) has biased composition (basic and acidic residues).

Belongs to the mitochondrion-specific ribosomal protein mS34 family. As to quaternary structure, component of the mitochondrial small ribosomal subunit (mt-SSU). Mature mammalian 55S mitochondrial ribosomes consist of a small (28S) and a large (39S) subunit. The 28S small subunit contains a 12S ribosomal RNA (12S mt-rRNA) and 30 different proteins. The 39S large subunit contains a 16S rRNA (16S mt-rRNA), a copy of mitochondrial valine transfer RNA (mt-tRNA(Val)), which plays an integral structural role, and 52 different proteins.

The protein resides in the mitochondrion. Its function is as follows. Required for mitochondrial translation, plays a role in maintaining the stability of the small ribosomal subunit and the 12S rRNA that are required for mitoribosome formation. In Homo sapiens (Human), this protein is Small ribosomal subunit protein mS34 (MRPS34).